The primary structure comprises 247 residues: Probable transcriptional regulatory protein Syncc9605_2132 (247 aa).

This sequence belongs to the TACO1 family.

It localises to the cytoplasm. The polypeptide is Probable transcriptional regulatory protein Syncc9605_2132 (Synechococcus sp. (strain CC9605)).